A 1042-amino-acid chain; its full sequence is Signal-induced proliferation-associated protein 1 (1042 aa).

Disordered stretches follow at residues 1–87 and 132–153; these read MPMW…TSTR and SQGM…EDQA. Threonine 64 bears the Phosphothreonine mark. Residue serine 67 is modified to Phosphoserine. Over residues 134 to 146 the composition is skewed to polar residues; it reads GMGSHSEASSGTL. Residues serine 182, serine 304, and serine 314 each carry the phosphoserine modification. A Rap-GAP domain is found at 321 to 539; it reads LLTLDEQVLS…RTRQQYLQDL (219 aa). The 77-residue stretch at 687–763 folds into the PDZ domain; the sequence is ELALPRDGQG…VCVTVLPPDE (77 aa). Residues serine 817, serine 839, and serine 912 each carry the phosphoserine modification. Residues 830-903 form a disordered region; it reads EFLHSQNSLS…PAPELRASFL (74 aa). Residues 832–845 are compositionally biased toward low complexity; that stretch reads LHSQNSLSPRSSLS. Residues 946–980 form a disordered region; the sequence is LSREGQPIPESGDPKGTPKSDAEPEPGNLSEKVSH. A compositionally biased stretch (basic and acidic residues) spans 957-967; it reads GDPKGTPKSDA. A coiled-coil region spans residues 972-1034; it reads GNLSEKVSHL…TRLLLASKQL (63 aa).

As to quaternary structure, interacts with RRP1B; the interaction leads to inhibition of SIPA1 GTPase activity. In terms of tissue distribution, expressed in fetal as well as in adult tissues. Expressed abundantly in the lymphoid tissues such as thymus, spleen and peripheral blood lymphocytes and also shows a significant expression in the spinal cord.

It is found in the nucleus. The protein resides in the cytoplasm. Its subcellular location is the perinuclear region. The protein localises to the endomembrane system. In terms of biological role, GTPase activator for the nuclear Ras-related regulatory proteins Rap1 and Rap2 in vitro, converting them to the putatively inactive GDP-bound state. Affects cell cycle progression. In Homo sapiens (Human), this protein is Signal-induced proliferation-associated protein 1 (SIPA1).